The following is a 378-amino-acid chain: Ribosomal RNA large subunit methyltransferase G (378 aa).

It belongs to the methyltransferase superfamily. RlmG family.

Its subcellular location is the cytoplasm. It catalyses the reaction guanosine(1835) in 23S rRNA + S-adenosyl-L-methionine = N(2)-methylguanosine(1835) in 23S rRNA + S-adenosyl-L-homocysteine + H(+). In terms of biological role, specifically methylates the guanine in position 1835 (m2G1835) of 23S rRNA. The polypeptide is Ribosomal RNA large subunit methyltransferase G (Shigella boydii serotype 4 (strain Sb227)).